The following is a 567-amino-acid chain: 2-succinyl-5-enolpyruvyl-6-hydroxy-3-cyclohexene-1-carboxylate synthase (567 aa).

This sequence belongs to the TPP enzyme family. MenD subfamily. Homodimer. Mg(2+) serves as cofactor. Requires Mn(2+) as cofactor. Thiamine diphosphate is required as a cofactor.

The catalysed reaction is isochorismate + 2-oxoglutarate + H(+) = 5-enolpyruvoyl-6-hydroxy-2-succinyl-cyclohex-3-ene-1-carboxylate + CO2. It participates in quinol/quinone metabolism; 1,4-dihydroxy-2-naphthoate biosynthesis; 1,4-dihydroxy-2-naphthoate from chorismate: step 2/7. It functions in the pathway quinol/quinone metabolism; menaquinone biosynthesis. Functionally, catalyzes the thiamine diphosphate-dependent decarboxylation of 2-oxoglutarate and the subsequent addition of the resulting succinic semialdehyde-thiamine pyrophosphate anion to isochorismate to yield 2-succinyl-5-enolpyruvyl-6-hydroxy-3-cyclohexene-1-carboxylate (SEPHCHC). The sequence is that of 2-succinyl-5-enolpyruvyl-6-hydroxy-3-cyclohexene-1-carboxylate synthase from Yersinia pseudotuberculosis serotype I (strain IP32953).